Here is a 542-residue protein sequence, read N- to C-terminus: TOM1-like protein 7 (542 aa).

The region spanning 29–158 (ATSELLRTPD…ELKRCGVKFP (130 aa)) is the VHS domain. Residue Ser-161 is modified to Phosphoserine. The GAT domain maps to 201 to 289 (EIESLSLSSL…VLARHDAIAS (89 aa)). Positions 303-340 (RETSSSLKTCGAAALESADSESSSSSSSSESETDEVED) are disordered. Over residues 314-332 (AAALESADSESSSSSSSSE) the composition is skewed to low complexity. At Ser-521 the chain carries Phosphoserine. The interval 522-542 (FPARATGTSGAATAATVDRQP) is disordered. Residues 524–542 (ARATGTSGAATAATVDRQP) show a composition bias toward low complexity.

This sequence belongs to the TOM1 family. Preferentially expressed in flowers.

The protein resides in the membrane. Might contribute to the loading of the ESCRT machinery. The chain is TOM1-like protein 7 from Arabidopsis thaliana (Mouse-ear cress).